The following is a 164-amino-acid chain: Thiol peroxidase (164 aa).

The region spanning 18-163 (INEGDFAPDF…FDAALAAYKN (146 aa)) is the Thioredoxin domain. Cys-60 (cysteine sulfenic acid (-SOH) intermediate) is an active-site residue. A disulfide bridge links Cys-60 with Cys-93.

This sequence belongs to the peroxiredoxin family. Tpx subfamily. In terms of assembly, homodimer.

The catalysed reaction is a hydroperoxide + [thioredoxin]-dithiol = an alcohol + [thioredoxin]-disulfide + H2O. Its function is as follows. Thiol-specific peroxidase that catalyzes the reduction of hydrogen peroxide and organic hydroperoxides to water and alcohols, respectively. Plays a role in cell protection against oxidative stress by detoxifying peroxides. The protein is Thiol peroxidase of Staphylococcus aureus (strain Mu50 / ATCC 700699).